We begin with the raw amino-acid sequence, 92 residues long: Small ribosomal subunit protein uS19 (92 aa).

Belongs to the universal ribosomal protein uS19 family.

Its function is as follows. Protein S19 forms a complex with S13 that binds strongly to the 16S ribosomal RNA. The protein is Small ribosomal subunit protein uS19 of Rickettsia felis (strain ATCC VR-1525 / URRWXCal2) (Rickettsia azadi).